Here is a 641-residue protein sequence, read N- to C-terminus: MGRRSTSSTKSGKFMNPTDQARKEARKRELKKNKKQRMMVRAAVLKMKDPKQIIRDMEKLDEMEFNPVQQPQLNEKVLKDKRKKLRETFERILRLYEKENPDIYKELRKLEVEYEQKRAQLSQYFDAVKNAQHVEVESIPLPDMPHAPSNILIQDIPLPGAQPPSILKKTSAYGPPTRAVSILPLLGHGVPRLPPGRKPPGPPPGPPPPQVLQMYGRKVGFALDLPPRRRDEDMLYSPELAQRGHDDDMSSTSEDDGYPEDMDQDKHDDSTEDSDTDRSDAESDGDEFGHRDDSERDNTEEKKSGLSVRFADMPGKSRKKKKNMKELTPLQAMMLRMAGQEIPEEGREVEEFSEEEDDDDSEDSEAEKPSQKQHKEDSHADGSSAASSQQQAPPQAVPPSQIQAPPMPGPPPLGPPPAPPLRPPGPPTGLPPGPPPGAPPFLRPPGMPGIRGPLPRLLPPGPPPGRPPGPPPGPPPGLPPGPPPRGPPPRLPPPAPPGIPPPRPGMMRPPLVPPLGPAPPGLFPPAPLPNPGVLSAPPSLIQRPKADDASAATIEKKATATISAKPQITNPKAEVTRFVPTALRVRRENKGATAVPQRRSEEDSAVPVAKAAPRSGPSVPVSVQTKDDVYEAFMKEMEGLL.

Residues 1-11 (MGRRSTSSTKS) are compositionally biased toward polar residues. The tract at residues 1 to 37 (MGRRSTSSTKSGKFMNPTDQARKEARKRELKKNKKQR) is disordered. Positions 1–45 (MGRRSTSSTKSGKFMNPTDQARKEARKRELKKNKKQRMMVRAAVL) are required for nuclear import. Position 13 is an N6-acetyllysine (K13). The segment covering 28–37 (RELKKNKKQR) has biased composition (basic residues). The stretch at 75–133 (EKVLKDKRKKLRETFERILRLYEKENPDIYKELRKLEVEYEQKRAQLSQYFDAVKNAQH) forms a coiled coil. S181 is modified (phosphoserine). The segment at 186-213 (LGHGVPRLPPGRKPPGPPPGPPPPQVLQ) is disordered. R192 carries the post-translational modification Omega-N-methylarginine. Residues 192-210 (RLPPGRKPPGPPPGPPPPQ) show a composition bias toward pro residues. The tract at residues 217–221 (RKVGF) is interaction with PP1. Position 236 is a phosphotyrosine (Y236). The segment at 236-549 (YSPELAQRGH…LIQRPKADDA (314 aa)) is disordered. Position 237 is a phosphoserine (S237). The span at 253–263 (SEDDGYPEDMD) shows a compositional bias: acidic residues. Over residues 276 to 304 (TDRSDAESDGDEFGHRDDSERDNTEEKKS) the composition is skewed to basic and acidic residues. A phosphoserine mark is found at S279 and S283. The interval 306-310 (LSVRF) is interaction with PP1. Residues 351–365 (EFSEEEDDDDSEDSE) are compositionally biased toward acidic residues. 3 positions are modified to phosphoserine: S353, S361, and S364. A compositionally biased stretch (basic and acidic residues) spans 366–380 (AEKPSQKQHKEDSHA). The segment covering 381 to 404 (DGSSAASSQQQAPPQAVPPSQIQA) has biased composition (low complexity). 3 stretches are compositionally biased toward pro residues: residues 405–447 (PPMP…PPGM), 456–504 (RLLP…PPRP), and 510–530 (PLVP…PLPN). The PGR motif lies at 455–466 (PRLLPPGPPPGR). Residue K557 forms a Glycyl lysine isopeptide (Lys-Gly) (interchain with G-Cter in SUMO2) linkage. K565 is modified (N6-acetyllysine). A Glycyl lysine isopeptide (Lys-Gly) (interchain with G-Cter in SUMO2) cross-link involves residue K572. The segment at 588-623 (ENKGATAVPQRRSEEDSAVPVAKAAPRSGPSVPVSV) is disordered. S600 is modified (phosphoserine).

Interacts with PPP1CA, PPP1CB and PPP1CC. Interacts via the PGR motif with PQBP1 in the nucleus. Interacts with the WW domains of WBP4.

Its subcellular location is the nucleus. The protein localises to the cytoplasm. In terms of biological role, activates pre-mRNA splicing. May inhibit PP1 phosphatase activity. The chain is WW domain-binding protein 11 (Wbp11) from Rattus norvegicus (Rat).